The sequence spans 229 residues: PKHD-type hydroxylase BBta_3541 (229 aa).

The Fe2OG dioxygenase domain occupies 78–180 (QIFPPLFNRY…RVASFFWMQS (103 aa)). 3 residues coordinate Fe cation: His98, Asp100, and His161. Residue Arg171 participates in 2-oxoglutarate binding.

Fe(2+) is required as a cofactor. L-ascorbate serves as cofactor.

This is PKHD-type hydroxylase BBta_3541 from Bradyrhizobium sp. (strain BTAi1 / ATCC BAA-1182).